We begin with the raw amino-acid sequence, 262 residues long: MSHGGGGHAAELFPEDQVLAIGAVLSIIGMYVAQFVPSLAMLIGGLLAAGACVAGANTTRRVAAYGLGTGVPSIGMVSLGMGTISALAGVLIPSAFGLPVLATPILAAVIAVVVGFIVGKLTQNPVGMKVPIIVSSMTKLSLMGALAILGFCTAFAGGFSADLIINGAINNGVIALAFIAAGMSILHPFNACIGPDESHKRTITLAVACGLMAWLIFSIAKLDIVSIVVAAIFWLYTYGSFVKMSLGDACEVKYVPELPKKE.

The next 6 membrane-spanning stretches (helical) occupy residues Phe-35–Asn-57, Gly-70–Ile-92, Gly-97–Gly-119, Leu-140–Asp-162, Gly-172–Gly-194, and Trp-214–Tyr-236.

This sequence belongs to the MtrC family. The complex is composed of 8 subunits; MtrA, MtrB, MtrC, MtrD, MtrE, MtrF, MtrG and MtrH.

Its subcellular location is the cell membrane. The enzyme catalyses 5-methyl-5,6,7,8-tetrahydromethanopterin + coenzyme M + 2 Na(+)(in) = 5,6,7,8-tetrahydromethanopterin + methyl-coenzyme M + 2 Na(+)(out). It functions in the pathway one-carbon metabolism; methanogenesis from CO(2); methyl-coenzyme M from 5,10-methylene-5,6,7,8-tetrahydromethanopterin: step 2/2. In terms of biological role, part of a complex that catalyzes the formation of methyl-coenzyme M and tetrahydromethanopterin from coenzyme M and methyl-tetrahydromethanopterin. This is an energy-conserving, sodium-ion translocating step. The polypeptide is Tetrahydromethanopterin S-methyltransferase subunit C (Methanococcus maripaludis (strain DSM 14266 / JCM 13030 / NBRC 101832 / S2 / LL)).